Consider the following 443-residue polypeptide: Chromosome partition protein MukF (443 aa).

A leucine-zipper region spans residues 209–237 (LDETSINLRELQDTLNAAGDKLQSQLLRI).

The protein belongs to the MukF family. In terms of assembly, interacts, and probably forms a ternary complex, with MukE and MukB via its C-terminal region. The complex formation is stimulated by calcium or magnesium. It is required for an interaction between MukE and MukB.

Its subcellular location is the cytoplasm. It is found in the nucleoid. Involved in chromosome condensation, segregation and cell cycle progression. May participate in facilitating chromosome segregation by condensation DNA from both sides of a centrally located replisome during cell division. Not required for mini-F plasmid partitioning. Probably acts via its interaction with MukB and MukE. Overexpression results in anucleate cells. It has a calcium binding activity. The sequence is that of Chromosome partition protein MukF from Haemophilus ducreyi (strain 35000HP / ATCC 700724).